The sequence spans 548 residues: Probable malate:quinone oxidoreductase (548 aa).

Belongs to the MQO family. FAD is required as a cofactor.

The enzyme catalyses (S)-malate + a quinone = a quinol + oxaloacetate. It functions in the pathway carbohydrate metabolism; tricarboxylic acid cycle; oxaloacetate from (S)-malate (quinone route): step 1/1. This Escherichia coli (strain SE11) protein is Probable malate:quinone oxidoreductase.